Consider the following 98-residue polypeptide: NADH-ubiquinone oxidoreductase chain 4L (98 aa).

The next 3 helical transmembrane spans lie at 1-21 (MPSTYINILLAFTMALLGLLL), 29-49 (SLLCLEGLMLALFILSTLMAL), and 61-81 (IVLMVFAACEAALGLALLVMV).

This sequence belongs to the complex I subunit 4L family. In terms of assembly, core subunit of respiratory chain NADH dehydrogenase (Complex I) which is composed of 45 different subunits.

The protein localises to the mitochondrion inner membrane. It carries out the reaction a ubiquinone + NADH + 5 H(+)(in) = a ubiquinol + NAD(+) + 4 H(+)(out). Functionally, core subunit of the mitochondrial membrane respiratory chain NADH dehydrogenase (Complex I) which catalyzes electron transfer from NADH through the respiratory chain, using ubiquinone as an electron acceptor. Part of the enzyme membrane arm which is embedded in the lipid bilayer and involved in proton translocation. The sequence is that of NADH-ubiquinone oxidoreductase chain 4L (MT-ND4L) from Choloepus didactylus (Southern two-toed sloth).